A 159-amino-acid polypeptide reads, in one-letter code: Major allergen Mal d 1 (159 aa).

Belongs to the BetVI family.

The chain is Major allergen Mal d 1 from Malus domestica (Apple).